The primary structure comprises 156 residues: Small ribosomal subunit protein uS7 (156 aa).

This sequence belongs to the universal ribosomal protein uS7 family. As to quaternary structure, part of the 30S ribosomal subunit. Contacts proteins S9 and S11.

In terms of biological role, one of the primary rRNA binding proteins, it binds directly to 16S rRNA where it nucleates assembly of the head domain of the 30S subunit. Is located at the subunit interface close to the decoding center, probably blocks exit of the E-site tRNA. The sequence is that of Small ribosomal subunit protein uS7 from Enterobacter sp. (strain 638).